Here is a 390-residue protein sequence, read N- to C-terminus: Chorismate synthase (390 aa).

Residues R39 and R45 each contribute to the NADP(+) site. FMN contacts are provided by residues R132–S134, N253–A254, G298, K313–T317, and R339.

It belongs to the chorismate synthase family. As to quaternary structure, homotetramer. Requires FMNH2 as cofactor.

It carries out the reaction 5-O-(1-carboxyvinyl)-3-phosphoshikimate = chorismate + phosphate. The protein operates within metabolic intermediate biosynthesis; chorismate biosynthesis; chorismate from D-erythrose 4-phosphate and phosphoenolpyruvate: step 7/7. Its function is as follows. Catalyzes the anti-1,4-elimination of the C-3 phosphate and the C-6 proR hydrogen from 5-enolpyruvylshikimate-3-phosphate (EPSP) to yield chorismate, which is the branch point compound that serves as the starting substrate for the three terminal pathways of aromatic amino acid biosynthesis. This reaction introduces a second double bond into the aromatic ring system. In Bacillus licheniformis (strain ATCC 14580 / DSM 13 / JCM 2505 / CCUG 7422 / NBRC 12200 / NCIMB 9375 / NCTC 10341 / NRRL NRS-1264 / Gibson 46), this protein is Chorismate synthase.